The primary structure comprises 636 residues: Methyl-CpG-binding domain protein 1 (636 aa).

An MBD domain is found at 1-69; the sequence is MAESWQDCPA…TLFDFRQGTL (69 aa). A disordered region spans residues 75-113; it reads KTHPLAVPSKKKKKPSKPAKTKKQQVGLQRSEVRIETPQ. Residues 83–97 show a composition bias toward basic residues; it reads SKKKKKPSKPAKTKK. A Nuclear localization signal motif is present at residues 84–88; sequence KKKKK. Lys117 is covalently cross-linked (Glycyl lysine isopeptide (Lys-Gly) (interchain with G-Cter in SUMO2)). CXXC-type zinc fingers lie at residues 187–234 and 235–281; these read RMFK…RRCL and RIME…RRCF. Cys194, Cys197, Cys200, Cys206, Cys209, Cys212, Cys228, Cys233, Cys243, Cys246, Cys249, Cys255, Cys258, Cys261, Cys275, and Cys280 together coordinate Zn(2+). The segment at 291–314 is disordered; the sequence is GSKVASQRHSQAPPLPPHPASQYT. Residue Lys293 forms a Glycyl lysine isopeptide (Lys-Gly) (interchain with G-Cter in SUMO2) linkage. The segment at 348–396 adopts a CXXC-type 3 zinc-finger fold; sequence TNQRQNRKCGACAACLRRMDCGRCDFCCDKPKFGGGNQKRQKCRWRQCL. Residues Cys356, Cys359, Cys362, Cys368, Cys371, Cys374, Cys390, and Cys395 each coordinate Zn(2+). The interval 407–474 is disordered; sequence AGSGSGEGAG…GRGSVLPQPD (68 aa). Ser409 is modified (phosphoserine). Glycyl lysine isopeptide (Lys-Gly) (interchain with G-Cter in SUMO2) cross-links involve residues Lys443 and Lys461. Residues Lys520 and Lys559 each participate in a glycyl lysine isopeptide (Lys-Gly) (interchain with G-Cter in SUMO2); alternate cross-link. Residues 543 to 589 form a disordered region; that stretch reads QSGFPSKAADPDLSPVKQEPPGPEEDGEEKKDDVSETTPAEEIGGVG. Residues 550-612 form a transcriptional repression domain (TRD) region; the sequence is AADPDLSPVK…RLRDAEAWLP (63 aa).

Interacts with OASL, ATF7IP, ATF7IP2 and BAHD1. Binds CHAF1A and the SUV39H1-CBX5 complex via the MBD domain. Binds MGP via the TRD domain. May be part of the MeCP1 complex. During DNA replication, it recruits SETDB1 to form a S phase-specific complex that facilitates methylation of H3 'Lys-9' during replication-coupled chromatin assembly and is at least composed of the CAF-1 subunit CHAF1A, MBD1 and SETDB1. As to quaternary structure, interacts with the Ten-1 ICD form of TENM1. In terms of processing, sumoylated, sumoylation may increase interaction with ATF7IP. Highly expressed in kidney, liver and brain. Detected at lower levels in heart, lung, skeletal muscle, spleen and testis.

Its subcellular location is the nucleus. It localises to the nucleus matrix. The protein localises to the nucleus speckle. It is found in the chromosome. Transcriptional repressor that binds CpG islands in promoters where the DNA is methylated at position 5 of cytosine within CpG dinucleotides. Binding is abolished by the presence of 7-mG that is produced by DNA damage by methylmethanesulfonate (MMS). Acts as transcriptional repressor and plays a role in gene silencing by recruiting ATF7IP, which in turn recruits factors such as the histone methyltransferase SETDB1. Probably forms a complex with SETDB1 and ATF7IP that represses transcription and couples DNA methylation and histone 'Lys-9' trimethylation. Isoform 1 can also repress transcription from unmethylated promoters. The chain is Methyl-CpG-binding domain protein 1 from Mus musculus (Mouse).